Consider the following 255-residue polypeptide: uncharacterized protein (255 aa).

The first 23 residues, 1 to 23 (MKRLNKLVLYISFLILVISFTAG), serve as a signal peptide directing secretion. The N-palmitoyl cysteine moiety is linked to residue C24. C24 carries the S-diacylglycerol cysteine lipid modification.

Belongs to the staphylococcal tandem lipoprotein family.

The protein resides in the cell membrane. This is an uncharacterized protein from Staphylococcus aureus (strain N315).